Here is a 248-residue protein sequence, read N- to C-terminus: PF03932 family protein CutC (248 aa).

It belongs to the CutC family.

It localises to the cytoplasm. In Porphyromonas gingivalis (strain ATCC BAA-308 / W83), this protein is PF03932 family protein CutC.